The primary structure comprises 309 residues: Glutaminase (309 aa).

The substrate site is built by S64, N114, E160, N167, Y191, Y243, and V261.

Belongs to the glutaminase family. Homotetramer.

It catalyses the reaction L-glutamine + H2O = L-glutamate + NH4(+). In Methylorubrum extorquens (strain PA1) (Methylobacterium extorquens), this protein is Glutaminase.